The chain runs to 501 residues: Zinc finger protein PLAG1 (501 aa).

Positions 1 to 30 (MATVIPGDLSEVRDTQKVPSGKRKRGETKP) are disordered. Positions 22–25 (KRKR) match the Nuclear localization signal motif. 7 consecutive C2H2-type zinc fingers follow at residues 34 to 56 (FPCQ…SYSH), 62 to 86 (YKCT…MATH), 92 to 114 (HKCN…LHTH), 121 to 143 (FKCE…LALH), 150 to 172 (LTCK…LKTH), 185 to 207 (HQCE…MVVH), and 213 to 236 (FLCQ…KKSH). 2 stretches are compositionally biased toward low complexity: residues 366 to 380 (SGMP…ASSS) and 455 to 467 (TQLP…PQDP). Disordered regions lie at residues 366–406 (SGMP…GSVP) and 447–474 (QEEA…IGLG).

Belongs to the krueppel C2H2-type zinc-finger protein family. Expressed in nephroblastoma.

It localises to the nucleus. Functionally, transcription factor and proto-oncogene whose activation results in up-regulation of target genes, such as IGFII, leading to uncontrolled cell proliferation. In Gallus gallus (Chicken), this protein is Zinc finger protein PLAG1 (PLAG1).